Consider the following 366-residue polypeptide: tRNA 2-selenouridine synthase (366 aa).

In terms of domain architecture, Rhodanese spans 12–135 (FLNDVPMMDA…MRTFLLDTLH (124 aa)). The S-selanylcysteine intermediate role is filled by Cys-95.

It belongs to the SelU family. In terms of assembly, monomer.

The catalysed reaction is 5-methylaminomethyl-2-thiouridine(34) in tRNA + selenophosphate + (2E)-geranyl diphosphate + H2O + H(+) = 5-methylaminomethyl-2-selenouridine(34) in tRNA + (2E)-thiogeraniol + phosphate + diphosphate. It catalyses the reaction 5-methylaminomethyl-2-thiouridine(34) in tRNA + (2E)-geranyl diphosphate = 5-methylaminomethyl-S-(2E)-geranyl-thiouridine(34) in tRNA + diphosphate. It carries out the reaction 5-methylaminomethyl-S-(2E)-geranyl-thiouridine(34) in tRNA + selenophosphate + H(+) = 5-methylaminomethyl-2-(Se-phospho)selenouridine(34) in tRNA + (2E)-thiogeraniol. The enzyme catalyses 5-methylaminomethyl-2-(Se-phospho)selenouridine(34) in tRNA + H2O = 5-methylaminomethyl-2-selenouridine(34) in tRNA + phosphate. Involved in the post-transcriptional modification of the uridine at the wobble position (U34) of tRNA(Lys), tRNA(Glu) and tRNA(Gln). Catalyzes the conversion of 2-thiouridine (S2U-RNA) to 2-selenouridine (Se2U-RNA). Acts in a two-step process involving geranylation of 2-thiouridine (S2U) to S-geranyl-2-thiouridine (geS2U) and subsequent selenation of the latter derivative to 2-selenouridine (Se2U) in the tRNA chain. This Pseudomonas syringae pv. tomato (strain ATCC BAA-871 / DC3000) protein is tRNA 2-selenouridine synthase.